We begin with the raw amino-acid sequence, 363 residues long: 3-isopropylmalate dehydrogenase (363 aa).

An NAD(+)-binding site is contributed by 78–91; the sequence is XXXXXXXXXXXXXX. Substrate is bound by residues Arg99, Arg109, Arg138, and Asp227. Residues Asp227, Asp251, and Asp255 each coordinate Mg(2+). 285-297 is a binding site for NAD(+); sequence GSAPDIEGKNIAN.

The protein belongs to the isocitrate and isopropylmalate dehydrogenases family. LeuB type 1 subfamily. Homodimer. The cofactor is Mg(2+). Requires Mn(2+) as cofactor.

It localises to the cytoplasm. The catalysed reaction is (2R,3S)-3-isopropylmalate + NAD(+) = 4-methyl-2-oxopentanoate + CO2 + NADH. It functions in the pathway amino-acid biosynthesis; L-leucine biosynthesis; L-leucine from 3-methyl-2-oxobutanoate: step 3/4. In terms of biological role, catalyzes the oxidation of 3-carboxy-2-hydroxy-4-methylpentanoate (3-isopropylmalate) to 3-carboxy-4-methyl-2-oxopentanoate. The product decarboxylates to 4-methyl-2 oxopentanoate. In Buchnera aphidicola subsp. Uroleucon solidaginis, this protein is 3-isopropylmalate dehydrogenase.